Here is a 357-residue protein sequence, read N- to C-terminus: DNA replication and repair protein RecF (357 aa).

Position 30–37 (Gly30–Thr37) interacts with ATP.

The protein belongs to the RecF family.

The protein resides in the cytoplasm. Functionally, the RecF protein is involved in DNA metabolism; it is required for DNA replication and normal SOS inducibility. RecF binds preferentially to single-stranded, linear DNA. It also seems to bind ATP. The protein is DNA replication and repair protein RecF of Shigella flexneri serotype 5b (strain 8401).